A 151-amino-acid chain; its full sequence is Large ribosomal subunit protein bL9 (151 aa).

This sequence belongs to the bacterial ribosomal protein bL9 family.

In terms of biological role, binds to the 23S rRNA. This is Large ribosomal subunit protein bL9 from Mycolicibacterium vanbaalenii (strain DSM 7251 / JCM 13017 / BCRC 16820 / KCTC 9966 / NRRL B-24157 / PYR-1) (Mycobacterium vanbaalenii).